A 730-amino-acid polypeptide reads, in one-letter code: Ribosomal RNA large subunit methyltransferase K/L (730 aa).

The region spanning 46–157 (TAYRLCVWSR…RGEAILSLDL (112 aa)) is the THUMP domain. The interval 394 to 418 (GERREAQPEGTEARQQVPQASEPAR) is disordered.

It belongs to the methyltransferase superfamily. RlmKL family.

The protein localises to the cytoplasm. It catalyses the reaction guanosine(2445) in 23S rRNA + S-adenosyl-L-methionine = N(2)-methylguanosine(2445) in 23S rRNA + S-adenosyl-L-homocysteine + H(+). The enzyme catalyses guanosine(2069) in 23S rRNA + S-adenosyl-L-methionine = N(2)-methylguanosine(2069) in 23S rRNA + S-adenosyl-L-homocysteine + H(+). Its function is as follows. Specifically methylates the guanine in position 2445 (m2G2445) and the guanine in position 2069 (m7G2069) of 23S rRNA. In Pseudomonas putida (strain ATCC 47054 / DSM 6125 / CFBP 8728 / NCIMB 11950 / KT2440), this protein is Ribosomal RNA large subunit methyltransferase K/L.